A 396-amino-acid polypeptide reads, in one-letter code: Elongation factor Tu (396 aa).

In terms of domain architecture, tr-type G spans 10 to 206 (KPHCNIGTIG…AVDAYIPQPE (197 aa)). A G1 region spans residues 19 to 26 (GHVDHGKT). 19 to 26 (GHVDHGKT) contacts GTP. Mg(2+) is bound at residue Thr26. The G2 stretch occupies residues 60–64 (GITIS). The interval 81–84 (DCPG) is G3. GTP contacts are provided by residues 81–85 (DCPGH) and 136–139 (NKCD). Residues 136 to 139 (NKCD) form a G4 region. Positions 174–176 (SAL) are G5.

The protein belongs to the TRAFAC class translation factor GTPase superfamily. Classic translation factor GTPase family. EF-Tu/EF-1A subfamily. In terms of assembly, monomer.

Its subcellular location is the cytoplasm. It catalyses the reaction GTP + H2O = GDP + phosphate + H(+). In terms of biological role, GTP hydrolase that promotes the GTP-dependent binding of aminoacyl-tRNA to the A-site of ribosomes during protein biosynthesis. The chain is Elongation factor Tu from Rhodopseudomonas palustris (strain BisB18).